We begin with the raw amino-acid sequence, 5255 residues long: SCO-spondin (5255 aa).

The N-terminal stretch at 1-18 (MGIVATVLLWVVTEAARG) is a signal peptide. In terms of domain architecture, EMI spans 19-111 (RWCERTEQVT…ACCAGWSGPH (93 aa)). Residues Asn-97, Asn-136, Asn-156, and Asn-255 are each glycosylated (N-linked (GlcNAc...) asparagine). The region spanning 192-358 (ASCTVWAGSR…PDANPELSCS (167 aa)) is the VWFD 1 domain. Intrachain disulfides connect Cys-194–Cys-317 and Cys-216–Cys-357. The TIL 1 domain occupies 453 to 508 (CGHGQRYSDCVSSCPASCMAAGTAEEGHCRDDCASGCECTPGLLLDRGACIPQSAC). Residues 508 to 601 (CPCLHRGHIY…CGGHQPLSCL (94 aa)) enclose the VWFC 1 domain. The VWFD 2 domain maps to 546-717 (AECAVLGDLH…NKYRVSTDCP (172 aa)). 3 disulfide bridges follow: Cys-548/Cys-681, Cys-570/Cys-716, and Cys-592/Cys-600. A glycan (N-linked (GlcNAc...) asparagine) is linked at Asn-801. The TIL 2 domain occupies 809-868 (CRGGQVYQECSSPCGRTCADLRLDGASSCPSLDNICVSGCNCPEGPVLDDGGQCVPPGVC). Residues 868–926 (CPCQHSSQLYPAGSKIRQGCNACMCTAGTWSCTDAPCPDAAFCPGDLVYVFGSCLRTCD) form the VWFC 2 domain. Asn-931 and Asn-972 each carry an N-linked (GlcNAc...) asparagine glycan. The VWFD 3 domain maps to 998-1168 (GTCVATGDPH…NSWRVSLLCP (171 aa)). Disulfide bonds link Cys-1000-Cys-1132, Cys-1022-Cys-1167, and Cys-1043-Cys-1050. The region spanning 1263–1319 (CDGGQEYSACGPPCPQTCRNLGLELPEHCDTMSCLEGCFCPEGKVLHEGSCIDPAEC) is the TIL 3 domain. N-linked (GlcNAc...) asparagine glycosylation is present at Asn-1340. 6 LDL-receptor class A domains span residues 1362-1398 (HCPDSEFPCRSGGRCVPGAWLCDNEDDCGDGSDEVCA), 1400-1436 (HCAPHQHRCADGQCVPWGARCDGLSDCGDGSDERGCP), 1439-1477 (PCAPPEFRCASGRCIPRAHVCNGELDCGFADDSDEAGCS), 1479-1515 (SCSVGEFQCAAGRCVPYPHRCNGHDDCGDFSDERGCV), 1515-1551 (VCPAGHFQCPDAQCLPPAALCDGMQDCGDGTDEAFCP), and 1555-1593 (TCAPGQLPCPDGSCVSQVKLCDGIWDCRDGWDESSVRCM). 18 cysteine pairs are disulfide-bonded: Cys-1363–Cys-1376, Cys-1370–Cys-1389, Cys-1383–Cys-1397, Cys-1401–Cys-1413, Cys-1408–Cys-1426, Cys-1420–Cys-1435, Cys-1440–Cys-1452, Cys-1447–Cys-1465, Cys-1459–Cys-1476, Cys-1480–Cys-1492, Cys-1487–Cys-1505, Cys-1499–Cys-1514, Cys-1516–Cys-1528, Cys-1523–Cys-1541, Cys-1535–Cys-1550, Cys-1556–Cys-1568, Cys-1563–Cys-1581, and Cys-1575–Cys-1592. Asn-1610 is a glycosylation site (N-linked (GlcNAc...) asparagine). LDL-receptor class A domains follow at residues 1616–1652 (VCGPYEFPCRSGQCVPRGWVCDSEADCPDNSDELGCN), 1654–1693 (SCVLGHFPCALGAHCIHYDHLCDGIPHCPDHSDESDDNCG), and 1699–1734 (PCPGHFVCNNRVCVNATRVCDGALDCPQGEDELACE). Intrachain disulfides connect Cys-1617–Cys-1629, Cys-1624–Cys-1642, and Cys-1636–Cys-1651. N-linked (GlcNAc...) asparagine glycosylation occurs at Asn-1652. 6 disulfide bridges follow: Cys-1655–Cys-1668, Cys-1662–Cys-1681, Cys-1675–Cys-1692, Cys-1700–Cys-1711, Cys-1706–Cys-1724, and Cys-1718–Cys-1733. N-linked (GlcNAc...) asparagine glycosylation is present at Asn-1713. N-linked (GlcNAc...) asparagine glycosylation is present at Asn-1743. The LDL-receptor class A 10 domain maps to 1748 to 1790 (PCAEYSCRDGDCITFKQVCNGLPDCRDGDMASGWLPSDEWDCG). Intrachain disulfides connect Cys-1749-Cys-1759, Cys-1754-Cys-1772, Cys-1766-Cys-1789, Cys-1801-Cys-1837, Cys-1805-Cys-1842, and Cys-1816-Cys-1827. 2 consecutive TSP type-1 domains span residues 1789 to 1843 (CGQW…TACP) and 1845 to 1903 (DGAW…DGCP). Asn-1856 carries an N-linked (GlcNAc...) asparagine glycan. Intrachain disulfides connect Cys-1857/Cys-1897, Cys-1861/Cys-1902, and Cys-1871/Cys-1881. The TIL 4 domain maps to 1907–1961 (CPGGLQPRPCAPCPASCADLASRAPCRREQCTPGCWCAEGLVLDGERGCVRPREC). 2 consecutive EGF-like domains span residues 1919 to 1956 (CPASCADLASRAPCRREQCTPGCWCAEGLVLDGERGCV) and 1957 to 1983 (RPRECRCEVDGLRYWPGQRMKLNCRLC). In terms of domain architecture, VWFC 3 spans 1961-2019 (CRCEVDGLRYWPGQRMKLNCRLCTCLDGQPRRCRHNPACSVSCSWSAWSPWGECLGPCG). One can recognise a TSP type-1 3 domain in the interval 2002 to 2058 (SCSWSAWSPWGECLGPCGVQSIQWSFRSPSHPGKHGTNRQCRGIYRKARRCQTEPCQ). Intrachain disulfides connect Cys-2003/Cys-2042, Cys-2014/Cys-2018, and Cys-2052/Cys-2057. The 63-residue stretch at 2058–2120 (QECEHQGRSR…GKGDSCCFCA (63 aa)) folds into the VWFC 4 domain. Residues Asn-2125 and Asn-2230 are each glycosylated (N-linked (GlcNAc...) asparagine). Cystine bridges form between Cys-2162–Cys-2310, Cys-2328–Cys-2339, Cys-2335–Cys-2352, and Cys-2346–Cys-2361. An F5/8 type C domain is found at 2162–2310 (CYSPLGIASL…IFLRAELLGC (149 aa)). The LDL-receptor class A 11 domain occupies 2327–2362 (PCGTGEFWCGVSCVTASRRCDGATDCPGGADEAGCE). The segment at 2352 to 2373 (CPGGADEAGCEPPSSTTLPTHP) is disordered. Positions 2364–2373 (PSSTTLPTHP) are enriched in polar residues. LDL-receptor class A domains are found at residues 2481–2517 (LCPPDQFLCDALGCVDAAMVCDGQQDCLDGSDEAHCG) and 2538–2574 (TCSPKQFSCGTGECLALEKRCDLSRDCADGSDESSCA). 12 disulfide bridges follow: Cys-2482/Cys-2494, Cys-2489/Cys-2507, Cys-2501/Cys-2516, Cys-2539/Cys-2551, Cys-2546/Cys-2564, Cys-2558/Cys-2573, Cys-2576/Cys-2612, Cys-2587/Cys-2591, Cys-2622/Cys-2627, Cys-2642/Cys-2679, Cys-2646/Cys-2684, and Cys-2657/Cys-2669. 2 consecutive TSP type-1 domains span residues 2575–2628 (DCIL…RACP) and 2630–2685 (PGAW…QPCG). One can recognise a TIL 5 domain in the interval 2708-2750 (PPCPQVCGDLSATSSCQSPCQEGCRCPPGLFLQEGTCVNASQC). A glycan (N-linked (GlcNAc...) asparagine) is linked at Asn-2746. TSP type-1 domains follow at residues 2790 to 2844 (ACAW…TPCA), 2849 to 2903 (SSGW…APCP), and 2905 to 2958 (AGVW…RPCG). Disulfide bonds link Cys-2791–Cys-2829, Cys-2802–Cys-2806, Cys-2839–Cys-2843, Cys-2861–Cys-2897, Cys-2865–Cys-2902, Cys-2881–Cys-2887, Cys-2917–Cys-2952, Cys-2921–Cys-2957, and Cys-2932–Cys-2942. The TIL 6 domain maps to 2971-3020 (EECRHSEGRCPWICQDLGAGVACTAQCQPGCHCPAGLLLQNGTCVPPSHC). 3 N-linked (GlcNAc...) asparagine glycosylation sites follow: Asn-3011, Asn-3042, and Asn-3065. The VWFC 5 domain maps to 3020 to 3077 (CLCHHRGHLYQPGDINALDTCNNCTCVTGQMVCSTETCPVPCTWSNWTAWSTCSHSCD). 2 TSP type-1 domains span residues 3060–3115 (PCTW…QPCR) and 3117–3158 (VAPW…APCP). Cystine bridges form between Cys-3061–Cys-3099, Cys-3072–Cys-3076, and Cys-3109–Cys-3114. Residue Asn-3136 is glycosylated (N-linked (GlcNAc...) asparagine). The region spanning 3165-3217 (CPPGKQWQACAQGAASCAELSAAPPADGSCHPGCYCPPGALLLNNECVAEAAC) is the TIL 7 domain. The VWFC 6 domain maps to 3217 to 3275 (CPCAVDGVLYQPGDVVPQGCHNCSCIAGRVTNCSQEDCGDVDGPWTPWTPWSECSASCG). Residues Asn-3238 and Asn-3248 are each glycosylated (N-linked (GlcNAc...) asparagine). Positions 3258–3309 (DGPWTPWTPWSECSASCGPGRQRRYRFCSAHPGVPCAEPQPQERPCARQPCH) constitute a TSP type-1 11 domain. Cystine bridges form between Cys-3270–Cys-3303, Cys-3274–Cys-3308, and Cys-3285–Cys-3293. 3 N-linked (GlcNAc...) asparagine glycosylation sites follow: Asn-3350, Asn-3366, and Asn-3392. 2 TSP type-1 domains span residues 3410–3475 (PGAW…PPCP) and 3477–3532 (DGAW…SSCP). 6 disulfide bridges follow: Cys-3422–Cys-3468, Cys-3426–Cys-3474, Cys-3437–Cys-3449, Cys-3489–Cys-3524, Cys-3492–Cys-3531, and Cys-3502–Cys-3514. The TIL 8 domain occupies 3534–3589 (CAGGLVAFTCGKPCPHSCEDLREDTACMATPRCLPACACPHGQLLQDGDCVPPELC). N-linked (GlcNAc...) asparagine glycosylation is found at Asn-3598 and Asn-3625. 2 consecutive TSP type-1 domains span residues 3644–3700 (DGGW…EGCP) and 3702–3751 (EEPW…HVCR). Intrachain disulfides connect Cys-3656-Cys-3693, Cys-3660-Cys-3699, Cys-3671-Cys-3683, Cys-3714-Cys-3745, Cys-3718-Cys-3750, and Cys-3729-Cys-3735. N-linked (GlcNAc...) asparagine glycosylation is found at Asn-3823 and Asn-3869. TSP type-1 domains follow at residues 3878 to 3934 (DGGF…PECP), 3951 to 4004 (EEGF…PLCS), 4018 to 4074 (NCSW…QACK), and 4076 to 4131 (DGAW…QPCD). 6 cysteine pairs are disulfide-bonded: Cys-3890–Cys-3928, Cys-3894–Cys-3933, Cys-3906–Cys-3918, Cys-3963–Cys-3998, Cys-3967–Cys-4003, and Cys-3982–Cys-3988. The disordered stretch occupies residues 3932–3951 (ECPAVPTTEPGPGVAGAEEE). Asn-4018 carries N-linked (GlcNAc...) asparagine glycosylation. Intrachain disulfides connect Cys-4019–Cys-4055, Cys-4030–Cys-4034, Cys-4068–Cys-4073, Cys-4088–Cys-4125, Cys-4092–Cys-4130, and Cys-4103–Cys-4115. A TIL 9 domain is found at 4134–4189 (CPPGMALVTCANHCPRHCGDLQEGIVCREEEHCEPGCRCPNGTLEQDGGCVPLAHC). Asn-4174 and Asn-4211 each carry an N-linked (GlcNAc...) asparagine glycan. 3 TSP type-1 domains span residues 4230-4282 (RCPW…GPCP), 4322-4384 (GAEH…RPCP), and 4386-4433 (ECSW…SGCS). 3 disulfides stabilise this stretch: Cys-4231–Cys-4266, Cys-4242–Cys-4246, and Cys-4276–Cys-4281. N-linked (GlcNAc...) asparagine glycosylation is present at Asn-4362. Intrachain disulfides connect Cys-4387–Cys-4417, Cys-4398–Cys-4400, and Cys-4427–Cys-4432. A glycan (N-linked (GlcNAc...) asparagine) is linked at Asn-4428. In terms of domain architecture, TIL 10 spans 4437-4492 (CEPPFEFQPCSPPCARLCSTLQHPELCPAQSHCLPGCFCPQGLLEQRSACVPPEQC). Residue Asn-4498 is glycosylated (N-linked (GlcNAc...) asparagine). TSP type-1 domains lie at 4537 to 4608 (LPLS…DICQ) and 4610 to 4662 (LCLW…AVCP). 6 disulfide bridges follow: Cys-4548-Cys-4601, Cys-4551-Cys-4607, Cys-4575-Cys-4591, Cys-4611-Cys-4646, Cys-4622-Cys-4626, and Cys-4656-Cys-4661. A TIL 11 domain is found at 4675–4722 (TTCANSCPRACADLWQHVECVQGGCKPGCRCPQGQLLQDGLCVPTAQC). Residues Asn-4730, Asn-4747, and Asn-4752 are each glycosylated (N-linked (GlcNAc...) asparagine). 2 TSP type-1 domains span residues 4762–4815 (CPSY…QPCP) and 4817–4869 (GCQL…HNCT). Disulfide bonds link Cys-4774–Cys-4809, Cys-4778–Cys-4814, Cys-4789–Cys-4798, Cys-4818–Cys-4852, Cys-4829–Cys-4833, and Cys-4863–Cys-4868. Asn-4867 carries N-linked (GlcNAc...) asparagine glycosylation. The TIL 12 domain maps to 4872 to 4926 (CPRSQVHRECANACPHACADLRPQTQCLPQPCQPGCACPPGQVLQDGACVPPEEC). 2 N-linked (GlcNAc...) asparagine glycosylation sites follow: Asn-4939 and Asn-4970. The TSP type-1 27 domain occupies 4979–5033 (DCLWSPWSPWSPCSVTCGMGERLSHRHPLRQRLYEGAECLGPPVRRAACHLPDCA). Disulfide bonds link Cys-4980–Cys-5017, Cys-4991–Cys-4995, and Cys-5027–Cys-5032. Asn-5081, Asn-5122, and Asn-5169 each carry an N-linked (GlcNAc...) asparagine glycan. The 59-residue stretch at 5092 to 5150 (CECLHQGQLHQPGSEWQEQCARCRCVDGKANCTDGCTPLSCPEGEVKVREPGRCCPVCR) folds into the VWFC 7 domain. 4 disulfides stabilise this stretch: Cys-5161–Cys-5209, Cys-5175–Cys-5226, Cys-5185–Cys-5242, and Cys-5189–Cys-5244. The region spanning 5161 to 5248 (CRRFTELRNI…IHSCECSSCQ (88 aa)) is the CTCK domain.

This sequence belongs to the thrombospondin family.

The protein localises to the secreted. Its subcellular location is the extracellular space. Involved in the modulation of neuronal aggregation. May be involved in developmental events during the formation of the central nervous system. This Gallus gallus (Chicken) protein is SCO-spondin (SSPO).